The chain runs to 317 residues: Homoserine kinase (317 aa).

ATP is bound at residue Pro95–Ala105.

It belongs to the GHMP kinase family. Homoserine kinase subfamily.

It is found in the cytoplasm. The enzyme catalyses L-homoserine + ATP = O-phospho-L-homoserine + ADP + H(+). It functions in the pathway amino-acid biosynthesis; L-threonine biosynthesis; L-threonine from L-aspartate: step 4/5. Functionally, catalyzes the ATP-dependent phosphorylation of L-homoserine to L-homoserine phosphate. This chain is Homoserine kinase, found in Mycolicibacterium smegmatis (strain ATCC 700084 / mc(2)155) (Mycobacterium smegmatis).